The sequence spans 95 residues: uncharacterized protein (95 aa).

The helical transmembrane segment at 29–53 (LVSTATCMAALFLRFKLIAWVAFIL) threads the bilayer.

It localises to the membrane. This is an uncharacterized protein from Schizosaccharomyces pombe (strain 972 / ATCC 24843) (Fission yeast).